The following is a 229-amino-acid chain: Potassium/proton antiporter CemA (229 aa).

3 consecutive transmembrane segments (helical) span residues 7–27, 114–134, and 190–210; these read FTPLLYFASIVFLPWWISLSF, IISFVILSGYSIFGNEELVIL, and ISGLVSTFPVILDTLLKYWIF.

This sequence belongs to the CemA family.

It is found in the plastid. The protein localises to the chloroplast inner membrane. It catalyses the reaction K(+)(in) + H(+)(out) = K(+)(out) + H(+)(in). Contributes to K(+)/H(+) antiport activity by supporting proton efflux to control proton extrusion and homeostasis in chloroplasts in a light-dependent manner to modulate photosynthesis. Prevents excessive induction of non-photochemical quenching (NPQ) under continuous-light conditions. Indirectly promotes efficient inorganic carbon uptake into chloroplasts. In Jasminum nudiflorum (Winter jasmine), this protein is Potassium/proton antiporter CemA.